We begin with the raw amino-acid sequence, 262 residues long: Protein BcsX (262 aa).

The protein operates within glycan metabolism; bacterial cellulose biosynthesis. This chain is Protein BcsX (bcsX), found in Komagataeibacter xylinus (Gluconacetobacter xylinus).